The sequence spans 460 residues: Armadillo repeat-containing protein LFR (460 aa).

The segment covering 1–10 (MSHVRSAPAG) has biased composition (low complexity). The tract at residues 1 to 32 (MSHVRSAPAGKSGGGGGSTPAKRGRPFGSTTG) is disordered. ARM repeat units lie at residues 225 to 267 (ENET…NLAP), 321 to 360 (NEPF…NVAE), and 364 to 405 (DFRL…SLVS).

Interacts with CHR719, SWI3A and SWI3C. As to expression, expressed at low levels in coleoptiles, leaf tongues, mature leaves and nodes during the vegetative phase. Highly expressed in reproductive tissues such as young panicles, early developing seeds, embryos and endosperms.

The protein localises to the nucleus. In terms of biological role, plays critical roles in both embryo and endosperm development. Required for free nuclei division and cellularization in early endosperm development, by preventing premature cell death in the endosperm. Involved in the regulation of pattern formation and organ differentiation during embryogenesis, by regulating genes involved in the early stages of seed development. The sequence is that of Armadillo repeat-containing protein LFR from Oryza sativa subsp. japonica (Rice).